A 75-amino-acid chain; its full sequence is MPQISRYSDEQVEQLLAELLNVLEKHKAPTDLSLMVLGNMVTNLINTSIASAQRQAIANSFARALQSSINEDKAH.

This sequence belongs to the UPF0352 family.

This is UPF0352 protein YejL from Escherichia coli O139:H28 (strain E24377A / ETEC).